Here is a 550-residue protein sequence, read N- to C-terminus: ATP synthase subunit alpha (550 aa).

172-179 (GDRKTGKT) serves as a coordination point for ATP. Residues 514–550 (EDEQRVNEPPAKPLAGEENRETVTRFRDGTTDRPAES) are disordered. Over residues 528 to 550 (AGEENRETVTRFRDGTTDRPAES) the composition is skewed to basic and acidic residues.

The protein belongs to the ATPase alpha/beta chains family. F-type ATPases have 2 components, CF(1) - the catalytic core - and CF(0) - the membrane proton channel. CF(1) has five subunits: alpha(3), beta(3), gamma(1), delta(1), epsilon(1). CF(0) has three main subunits: a(1), b(2) and c(9-12). The alpha and beta chains form an alternating ring which encloses part of the gamma chain. CF(1) is attached to CF(0) by a central stalk formed by the gamma and epsilon chains, while a peripheral stalk is formed by the delta and b chains.

The protein localises to the cell membrane. It catalyses the reaction ATP + H2O + 4 H(+)(in) = ADP + phosphate + 5 H(+)(out). In terms of biological role, produces ATP from ADP in the presence of a proton gradient across the membrane. The alpha chain is a regulatory subunit. The protein is ATP synthase subunit alpha of Salinispora arenicola (strain CNS-205).